A 2000-amino-acid chain; its full sequence is Sodium channel protein type 3 subunit alpha (2000 aa).

Topologically, residues 1–128 are cytoplasmic; it reads MAQALLVPPG…KIAIKILVHS (128 aa). The disordered stretch occupies residues 28–60; that stretch reads RAAEEKAKKPKKEQDNDDENKPKPNSDLEAGKN. Basic and acidic residues predominate over residues 46-57; that stretch reads ENKPKPNSDLEA. The stretch at 110–455 is one I repeat; sequence ILTPLNPVRK…QQMLEQLKKQ (346 aa). The helical transmembrane segment at 129–146 threads the bilayer; the sequence is LFSMLIMCTILTNCVFMT. Residues 147–152 are Extracellular-facing; it reads LSNPPD. Residues 153-174 form a helical membrane-spanning segment; that stretch reads WTKNVEYTFTGIYTFESLIKIL. Residues 175–188 lie on the Cytoplasmic side of the membrane; that stretch reads ARGFCLEDFTFLRD. Residues 189–206 form a helical membrane-spanning segment; sequence PWNWLDFSVIVMAYVTEF. The Extracellular portion of the chain corresponds to 207 to 213; it reads VSLGNVS. Residue Asn211 is glycosylated (N-linked (GlcNAc...) asparagine). Residues 214–235 form a helical membrane-spanning segment; sequence ALRTFRVLRALKTISVIPGLKT. At 236–249 the chain is on the cytoplasmic side; it reads IVGALIQSVKKLSD. Residues 250 to 269 traverse the membrane as a helical segment; that stretch reads VMILTVFCLSVFALIGLQLF. Over 270-369 the chain is Extracellular; sequence MGNLRNKCLQ…NYGYTSFDTF (100 aa). 5 N-linked (GlcNAc...) asparagine glycosylation sites follow: Asn290, Asn296, Asn302, Asn307, and Asn339. An intramembrane region (pore-forming) is located at residues 370-386; sequence SWAFLSLFRLMTQDYWE. Over 387-397 the chain is Extracellular; sequence NLYQLTLRAAG. A helical membrane pass occupies residues 398-424; that stretch reads KTYMIFFVLVIFLGSFYLVNLILAVVA. Topologically, residues 425-761 are cytoplasmic; it reads MAYEEQNQAT…LVNLIVMDPF (337 aa). A phosphoserine mark is found at Ser484, Ser485, and Ser486. Disordered stretches follow at residues 493–528, 587–631, and 662–681; these read SKSA…KSES, VGSE…ASMS, and ALTS…ETEV. The span at 500–509 shows a compositional bias: basic residues; that stretch reads RNRRKKRRQR. Composition is skewed to basic and acidic residues over residues 510-528 and 596-610; these read EHLE…KSES and DEHS…RRDS. Positions 662 to 678 are enriched in polar residues; the sequence is ALTSPTGQLPPEGTTTE. An II repeat occupies 742-1014; sequence CCDAWLKVKH…QIAVGRMQKG (273 aa). The chain crosses the membrane as a helical span at residues 762–779; sequence VDLAITICIVLNTLFMAM. Over 780 to 787 the chain is Extracellular; it reads EHYPMTEQ. The chain crosses the membrane as a helical span at residues 788 to 812; it reads FSSVLTVGNLVFTGIFTAEMVLKII. Residues 813–822 lie on the Cytoplasmic side of the membrane; that stretch reads AMDPYYYFQE. Residues 823 to 842 traverse the membrane as a helical segment; the sequence is GWNIFDGIIVSLSLMELGLS. At 843 to 846 the chain is on the extracellular side; the sequence is NVEG. A helical membrane pass occupies residues 847-865; it reads LSVLRSFRLLRVFKLAKSW. Residues 866–883 are Cytoplasmic-facing; the sequence is PTLNMLIKIIGNSVGALG. The chain crosses the membrane as a helical span at residues 884–904; the sequence is NLTLVLAIIVFIFAVVGMQLF. The Extracellular portion of the chain corresponds to 905-929; that stretch reads GKSYKECVCKINDDCTLPRWHMNDF. Cys913 and Cys919 form a disulfide bridge. An intramembrane region (pore-forming) is located at residues 930 to 945; sequence FHSFLIVFRVLCGEWI. Residues 946-956 lie on the Extracellular side of the membrane; the sequence is ETMWDCMEVAG. Cys951 and Cys960 are disulfide-bonded. Residues 957–983 traverse the membrane as a helical segment; it reads QTMCLIVFMLVMVIGNLVVLNLFLALL. The Cytoplasmic segment spans residues 984–1205; sequence LSSFSSDNLA…RKTCYSIVEH (222 aa). Positions 1118–1162 are disordered; it reads EEFSSESELEESKEKLNATSSSEGSTVDVVLPREGEQAETEPEED. The III repeat unit spans residues 1188–1499; that stretch reads KGKIWWNLRK…KKYYNAMKKL (312 aa). The chain crosses the membrane as a helical span at residues 1206–1226; that stretch reads NWFETFIVFMILLSSGALAFE. The Extracellular portion of the chain corresponds to 1227-1238; that stretch reads DIYIEQRKTIKT. The chain crosses the membrane as a helical span at residues 1239–1260; that stretch reads MLEYADKVFTYIFILEMLLKWV. Residues 1261 to 1266 are Cytoplasmic-facing; it reads AYGFQT. A helical membrane pass occupies residues 1267–1292; sequence YFTNAWCWLDFLIVDVSLVSLVANAL. The Extracellular segment spans residues 1293-1301; the sequence is GYSELGAIK. Residues 1302-1320 form a helical membrane-spanning segment; it reads SLRTLRALRPLRALSRFEG. The Cytoplasmic portion of the chain corresponds to 1321–1333; that stretch reads MRVVVNALVGAIP. A helical membrane pass occupies residues 1334–1356; the sequence is SIMNVLLVCLIFWLIFSIMGVNL. Over 1357–1402 the chain is Extracellular; the sequence is FAGKFYHCVNMTTGNMFDISDVNNLSDCQALGKQARWKNVKVNFDN. A disulfide bond links Cys1364 and Cys1384. Asn1366 and Asn1380 each carry an N-linked (GlcNAc...) asparagine glycan. Positions 1403–1419 form an intramembrane region, pore-forming; sequence VGAGYLALLQVATFKGW. The Extracellular portion of the chain corresponds to 1420–1442; it reads MDIMYAAVDSRDVKLQPVYEENL. The helical transmembrane segment at 1443–1468 threads the bilayer; sequence YMYLYFVIFIIFGSFFTLNLFIGVII. Over 1469–1526 the chain is Cytoplasmic; the sequence is DNFNQQKKKFGGQDIFMTEEQKKYYNAMKKLGSKKPQKPIPRPANKFQGMVFDFVTRQ. A Phosphoserine; by PKC modification is found at Ser1501. An IV repeat occupies 1508 to 1806; sequence IPRPANKFQG…WEKFDPDATQ (299 aa). A helical membrane pass occupies residues 1527 to 1545; the sequence is VFDISIMILICLNMVTMMV. Residues 1546–1553 are Extracellular-facing; that stretch reads ETDDQGKY. The chain crosses the membrane as a helical span at residues 1554 to 1577; sequence MTLVLSRINLVFIVLFTGEFVLKL. The Cytoplasmic portion of the chain corresponds to 1578–1587; sequence VSLRHYYFTI. Residues 1588-1605 form a helical membrane-spanning segment; the sequence is GWNIFDFVVVILSIVGMF. The Extracellular segment spans residues 1606 to 1617; it reads LAEMIEKYFVSP. Residues 1618-1640 form a helical membrane-spanning segment; that stretch reads TLFRVIRLARIGRILRLIKGAKG. Residues 1641 to 1653 are Cytoplasmic-facing; that stretch reads IRTLLFALMMSLP. A helical membrane pass occupies residues 1654-1677; the sequence is ALFNIGLLLFLVMFIYAIFGMSNF. The Extracellular portion of the chain corresponds to 1678 to 1699; it reads AYVKKEAGIDDMFNFETFGNSM. Positions 1700–1712 form an intramembrane region, pore-forming; it reads ICLFQITTSAGWD. At 1713 to 1744 the chain is on the extracellular side; that stretch reads GLLAPILNSAPPDCDPDTIHPGSSVKGDCGNP. A helical transmembrane segment spans residues 1745–1770; that stretch reads SVGIFFFVSYIIISFLVVVNMYIAVI. Residues 1771 to 2000 lie on the Cytoplasmic side of the membrane; it reads LENFSVATEE…KGKEVRENQK (230 aa). The region spanning 1900-1929 is the IQ domain; sequence EEVSAAIIQRNFRCYLLKQRLKNISSNYNK. Residues 1949–2000 are disordered; it reads LNGNSTPEKTDGSSSTTSPPSYDSVTKPDKEKFEKDKPEKESKGKEVRENQK. The segment covering 1974-2000 has biased composition (basic and acidic residues); it reads TKPDKEKFEKDKPEKESKGKEVRENQK.

It belongs to the sodium channel (TC 1.A.1.10) family. Nav1.3/SCN3A subfamily. As to quaternary structure, heterooligomer of an alpha subunit, SCN3A, and 1 to 3 regulatory beta subunits including SCN1B and SCN2B; disulfide-linked with some beta subunits like SCN2B. Interacts with NEDD4L; could regulate expression of SCN3A at the plasma membrane through ubiquitination-regulated endocytosis. Interacts with the conotoxin GVIIJ. May be ubiquitinated by NEDD4L; which would promote its endocytosis. In terms of processing, phosphorylation at Ser-1501 by PKC in a highly conserved cytoplasmic loop slows inactivation of the sodium channel and reduces peak sodium currents. In terms of tissue distribution, expressed in enterochromaffin cells in both colon and small bowel (at protein level).

The protein resides in the cell membrane. Its subcellular location is the basal cell membrane. The catalysed reaction is Na(+)(in) = Na(+)(out). Pore-forming subunit of Nav1.3, a voltage-gated sodium (Nav) channel that directly mediates the depolarizing phase of action potentials in excitable membranes. Navs, also called VGSCs (voltage-gated sodium channels) or VDSCs (voltage-dependent sodium channels), operate by switching between closed and open conformations depending on the voltage difference across the membrane. In the open conformation they allow Na(+) ions to selectively pass through the pore, along their electrochemical gradient. The influx of Na+ ions provokes membrane depolarization, initiating the propagation of electrical signals throughout cells and tissues. In some secretory cell types, it also participates in cell excitability through membrane depolarization and regulates cells responsiveness to stimuli triggering secretion. For instance, it controls the release of serotonin/5-hydroxytryptamine by enterochromaffin cells and is required for both glucagon- and glucose-induced insulin secretion in pancreatic endocrine cells. In Homo sapiens (Human), this protein is Sodium channel protein type 3 subunit alpha.